Reading from the N-terminus, the 854-residue chain is Periodic tryptophan protein 2 homolog (854 aa).

13 WD repeats span residues 9–52 (NLVG…TFPF), 53–93 (ENHK…LHYF), 94–132 (NFKS…EERE), 144–183 (GHFD…GFHP), 188–227 (GHKN…QAGE), 252–291 (NQNS…MLYQ), 294–334 (ITQS…YVLK), 337–376 (SHYD…CIVT), 379–418 (QHTS…NFRT), 422–464 (PSRV…ETLA), 465–504 (GHEG…GIVE), 507–546 (PIPS…QTSL), and 569–608 (SLNK…LIKK). T640 is modified (phosphothreonine). S645 bears the Phosphoserine mark. The stretch at 668 to 709 (TRPEIICHGVQFSPSGGAFAAATTEGLMIYSLYNDFLFDPIN) is one WD 14 repeat.

This sequence belongs to the WD repeat PWP2 family.

The sequence is that of Periodic tryptophan protein 2 homolog from Schizosaccharomyces pombe (strain 972 / ATCC 24843) (Fission yeast).